Consider the following 179-residue polypeptide: Stress response regulator gls24 homolog (179 aa).

The disordered stretch occupies residues Thr-147–Lys-179. Over residues Gly-165–Lys-179 the composition is skewed to basic and acidic residues.

Belongs to the asp23 family.

The sequence is that of Stress response regulator gls24 homolog from Streptococcus pyogenes serotype M28 (strain MGAS6180).